A 303-amino-acid polypeptide reads, in one-letter code: Acetaldehyde dehydrogenase 1 (303 aa).

Cys130 acts as the Acyl-thioester intermediate in catalysis. NAD(+)-binding positions include 161 to 169 (SVGPGTRKN) and Asn272.

This sequence belongs to the acetaldehyde dehydrogenase family.

It catalyses the reaction acetaldehyde + NAD(+) + CoA = acetyl-CoA + NADH + H(+). The protein is Acetaldehyde dehydrogenase 1 of Methylibium petroleiphilum (strain ATCC BAA-1232 / LMG 22953 / PM1).